Reading from the N-terminus, the 349-residue chain is Methylthioribose-1-phosphate isomerase (349 aa).

Residues 51–53 (RGA), Arg-94, and Gln-199 each bind substrate. Asp-240 serves as the catalytic Proton donor. A substrate-binding site is contributed by 250–251 (NK).

Belongs to the EIF-2B alpha/beta/delta subunits family. MtnA subfamily. Homodimer.

It carries out the reaction 5-(methylsulfanyl)-alpha-D-ribose 1-phosphate = 5-(methylsulfanyl)-D-ribulose 1-phosphate. The protein operates within amino-acid biosynthesis; L-methionine biosynthesis via salvage pathway; L-methionine from S-methyl-5-thio-alpha-D-ribose 1-phosphate: step 1/6. Catalyzes the interconversion of methylthioribose-1-phosphate (MTR-1-P) into methylthioribulose-1-phosphate (MTRu-1-P). The polypeptide is Methylthioribose-1-phosphate isomerase (Bacillus mycoides (strain KBAB4) (Bacillus weihenstephanensis)).